A 919-amino-acid chain; its full sequence is UPF0182 protein Tery_4385 (919 aa).

7 helical membrane passes run 6–26 (YIIIAISVILLVVFSLSRTLV), 52–72 (IFLWVGAFVIYFLFLWSNYWI), 96–116 (IFVKIIFLVNITLISLSAATA), 160–180 (WLFTLVFAGLIISIIVYALKG), 198–218 (THISLLLAGVTILIAVGFWFE), 243–263 (FAYWAMAIVALLLAVVCVLSV), and 268–288 (IIWPTYGIVIYIVLLGLFNVL).

This sequence belongs to the UPF0182 family.

Its subcellular location is the cell membrane. This Trichodesmium erythraeum (strain IMS101) protein is UPF0182 protein Tery_4385.